Here is a 113-residue protein sequence, read N- to C-terminus: MAFFLLLIVSLLTCIGQVCQKQAVVSWQNNSTTKARKTIFWLITAIAMLGFGMLFWLRLLQILPLSIAYPMLSINFIVVTLIGQFIYKETVNVKHWVGIASIMLGIVLMSMQS.

The next 3 membrane-spanning stretches (helical) occupy residues 39–59, 62–82, and 91–111; these read IFWL…WLRL, ILPL…VTLI, and VNVK…LMSM. The EamA domain maps to 42–111; the sequence is LITAIAMLGF…IMLGIVLMSM (70 aa).

Belongs to the ArnE family. Heterodimer of ArnE and ArnF.

Its subcellular location is the cell inner membrane. It functions in the pathway bacterial outer membrane biogenesis; lipopolysaccharide biosynthesis. In terms of biological role, translocates 4-amino-4-deoxy-L-arabinose-phosphoundecaprenol (alpha-L-Ara4N-phosphoundecaprenol) from the cytoplasmic to the periplasmic side of the inner membrane. This chain is Probable 4-amino-4-deoxy-L-arabinose-phosphoundecaprenol flippase subunit ArnE, found in Proteus mirabilis (strain HI4320).